Consider the following 431-residue polypeptide: Enolase (431 aa).

A (2R)-2-phosphoglycerate-binding site is contributed by Gln167. Glu209 serves as the catalytic Proton donor. Positions 246, 290, and 317 each coordinate Mg(2+). (2R)-2-phosphoglycerate is bound by residues Lys342, Arg371, Ser372, and Lys393. Lys342 (proton acceptor) is an active-site residue.

Belongs to the enolase family. In terms of assembly, component of the RNA degradosome, a multiprotein complex involved in RNA processing and mRNA degradation. Mg(2+) serves as cofactor.

The protein resides in the cytoplasm. Its subcellular location is the secreted. It localises to the cell surface. The enzyme catalyses (2R)-2-phosphoglycerate = phosphoenolpyruvate + H2O. The protein operates within carbohydrate degradation; glycolysis; pyruvate from D-glyceraldehyde 3-phosphate: step 4/5. In terms of biological role, catalyzes the reversible conversion of 2-phosphoglycerate (2-PG) into phosphoenolpyruvate (PEP). It is essential for the degradation of carbohydrates via glycolysis. This Enterobacter sp. (strain 638) protein is Enolase.